We begin with the raw amino-acid sequence, 307 residues long: Ribonuclease Z (307 aa).

Residues histidine 63, histidine 65, aspartate 67, histidine 68, histidine 143, aspartate 213, and histidine 271 each coordinate Zn(2+). Catalysis depends on aspartate 67, which acts as the Proton acceptor.

The protein belongs to the RNase Z family. In terms of assembly, homodimer. Zn(2+) is required as a cofactor.

The enzyme catalyses Endonucleolytic cleavage of RNA, removing extra 3' nucleotides from tRNA precursor, generating 3' termini of tRNAs. A 3'-hydroxy group is left at the tRNA terminus and a 5'-phosphoryl group is left at the trailer molecule.. Zinc phosphodiesterase, which displays some tRNA 3'-processing endonuclease activity. Probably involved in tRNA maturation, by removing a 3'-trailer from precursor tRNA. In Lactococcus lactis subsp. lactis (strain IL1403) (Streptococcus lactis), this protein is Ribonuclease Z.